The primary structure comprises 669 residues: L-type lectin-domain containing receptor kinase V.9 (669 aa).

The first 21 residues, 1 to 21, serve as a signal peptide directing secretion; that stretch reads MKFFVLVLLLVLQFFSNKALS. Over 22-286 the chain is Extracellular; it reads QSEEGEFGFN…RDSRSTSVKK (265 aa). Residues 38-259 form a legume-lectin like region; sequence SGIAITNSKG…SHYILGWTFK (222 aa). Asn-53, Asn-75, Asn-124, Asn-206, and Asn-261 each carry an N-linked (GlcNAc...) asparagine glycan. The chain crosses the membrane as a helical span at residues 287–307; the sequence is ILAISLSLTSLAILVFLTISY. Residues 308 to 669 lie on the Cytoplasmic side of the membrane; the sequence is MLFLKRKKLM…FTEPFVSHGR (362 aa). One can recognise a Protein kinase domain in the interval 344–603; sequence FRNSELLGKG…LGLFCSHPVA (260 aa). ATP contacts are provided by residues 350–358 and Lys-373; that span reads LGKGGFGKV. Asp-469 serves as the catalytic Proton acceptor.

This sequence in the C-terminal section; belongs to the protein kinase superfamily. Ser/Thr protein kinase family. The protein in the N-terminal section; belongs to the leguminous lectin family.

The protein resides in the cell membrane. The enzyme catalyses L-seryl-[protein] + ATP = O-phospho-L-seryl-[protein] + ADP + H(+). It carries out the reaction L-threonyl-[protein] + ATP = O-phospho-L-threonyl-[protein] + ADP + H(+). The sequence is that of L-type lectin-domain containing receptor kinase V.9 (LECRK59) from Arabidopsis thaliana (Mouse-ear cress).